The following is a 497-amino-acid chain: PHD finger protein 10 (497 aa).

The span at 1–13 (MTAAGPGAAPSPG) shows a compositional bias: low complexity. The tract at residues 1-61 (MTAAGPGAAP…SSRSCETSSQ (61 aa)) is disordered. Phosphoserine occurs at positions 11, 35, and 49. The tract at residues 88 to 184 (MLQEQVSEYL…HYKEYSQMQQ (97 aa)) is essential to induce neural progenitor proliferation. The segment at 88-294 (MLQEQVSEYL…PPLDPELPAL (207 aa)) is SAY. Lys240 is covalently cross-linked (Glycyl lysine isopeptide (Lys-Gly) (interchain with G-Cter in SUMO2)). The residue at position 269 (Ser269) is a Phosphoserine. A compositionally biased stretch (low complexity) spans 284–295 (EPPLDPELPALD). A disordered region spans residues 284–368 (EPPLDPELPA…RSVLSKSAPG (85 aa)). The interval 291–333 (LPALDSDGDSDDGEDGGGDEKRKNKGTSDSSSGNVSEGDSPPD) is essential to induce neural progenitor proliferation. Phosphoserine occurs at positions 296, 300, 326, and 330. Over residues 296 to 307 (SDGDSDDGEDGG) the composition is skewed to acidic residues. Residues 317-327 (TSDSSSGNVSE) are compositionally biased toward polar residues. A compositionally biased stretch (basic and acidic residues) spans 337 to 358 (DTFHGRQKSKDKMATPRKDGSK). The PHD-type 1; degenerate zinc-finger motif lies at 378–435 (LCGICLKGKESNKKGKAESLIHCSQCDNSGHPSCLDMTMELVSMIKTYPWQCMECKTC). A Glycyl lysine isopeptide (Lys-Gly) (interchain with G-Cter in SUMO2) cross-link involves residue Lys384. Residues 437–480 (ICGQPHHEEEMMFCDVCDRGYHTFCVGLGAIPSGRWICDCCQRA) form a PHD-type 2; degenerate zinc finger.

This sequence belongs to the SAYP family. In terms of assembly, component of neural progenitors-specific chromatin remodeling complex (npBAF complex) composed of at least, ARID1A/BAF250A or ARID1B/BAF250B, SMARCD1/BAF60A, SMARCD3/BAF60C, SMARCA2/BRM/BAF190B, SMARCA4/BRG1/BAF190A, SMARCB1/BAF47, SMARCC1/BAF155, SMARCE1/BAF57, SMARCC2/BAF170, PHF10/BAF45A, ACTL6A/BAF53A and actin. Interacts with ACTL6A/BAF53A, SMARCA2/BRM/BAF190B, SMARCA4/BRG1/BAF190A and PBRM1/BAF180. In terms of tissue distribution, widely expressed. Expressed selectively in neural stem and progenitor cells (at protein level).

It is found in the nucleus. Involved in transcription activity regulation by chromatin remodeling. Belongs to the neural progenitors-specific chromatin remodeling complex (npBAF complex) and is required for the proliferation of neural progenitors. During neural development a switch from a stem/progenitor to a post-mitotic chromatin remodeling mechanism occurs as neurons exit the cell cycle and become committed to their adult state. The transition from proliferating neural stem/progenitor cells to post-mitotic neurons requires a switch in subunit composition of the npBAF and nBAF complexes. As neural progenitors exit mitosis and differentiate into neurons, npBAF complexes which contain ACTL6A/BAF53A and PHF10/BAF45A, are exchanged for homologous alternative ACTL6B/BAF53B and DPF1/BAF45B or DPF3/BAF45C subunits in neuron-specific complexes (nBAF). The npBAF complex is essential for the self-renewal/proliferative capacity of the multipotent neural stem cells. The nBAF complex along with CREST plays a role regulating the activity of genes essential for dendrite growth. The protein is PHD finger protein 10 (Phf10) of Mus musculus (Mouse).